Consider the following 380-residue polypeptide: Chorismate synthase (380 aa).

NADP(+) is bound at residue arginine 47. FMN is bound by residues 124-126 (RSS), glycine 288, 303-307 (KPTST), and arginine 329.

Belongs to the chorismate synthase family. In terms of assembly, homotetramer. FMNH2 is required as a cofactor.

It catalyses the reaction 5-O-(1-carboxyvinyl)-3-phosphoshikimate = chorismate + phosphate. It functions in the pathway metabolic intermediate biosynthesis; chorismate biosynthesis; chorismate from D-erythrose 4-phosphate and phosphoenolpyruvate: step 7/7. Catalyzes the anti-1,4-elimination of the C-3 phosphate and the C-6 proR hydrogen from 5-enolpyruvylshikimate-3-phosphate (EPSP) to yield chorismate, which is the branch point compound that serves as the starting substrate for the three terminal pathways of aromatic amino acid biosynthesis. This reaction introduces a second double bond into the aromatic ring system. The sequence is that of Chorismate synthase from Leptospira interrogans serogroup Icterohaemorrhagiae serovar copenhageni (strain Fiocruz L1-130).